We begin with the raw amino-acid sequence, 535 residues long: Alkaline phosphatase, placental type (535 aa).

The first 22 residues, 1 to 22 (MLGPCMLLLLLLLGLRLQLSLG), serve as a signal peptide directing secretion. D64 lines the Mg(2+) pocket. D64 and S114 together coordinate Zn(2+). S114 acts as the Phosphoserine intermediate in catalysis. C143 and C205 are oxidised to a cystine. Residue N144 is glycosylated (N-linked (GlcNAc...) asparagine). Position 177 (S177) interacts with Mg(2+). Ca(2+) is bound at residue E238. The N-linked (GlcNAc...) asparagine glycan is linked to N271. Ca(2+) is bound by residues F291, E292, and D307. E333 is a binding site for Mg(2+). Residues D338, H342, D379, and H380 each contribute to the Zn(2+) site. Residues 425–449 (DGARPDVTESESGSPEYRQQSAVPL) are disordered. A compositionally biased stretch (polar residues) spans 434–446 (SESGSPEYRQQSA). H454 lines the Zn(2+) pocket. Residues C489 and C496 are joined by a disulfide bond. Residue D506 is the site of GPI-anchor amidated aspartate attachment. Residues 507–535 (AAHPGRSVVPALLPLLAGTLLLLETATAP) constitute a propeptide, removed in mature form. A helical membrane pass occupies residues 513-529 (SVVPALLPLLAGTLLLL).

Belongs to the alkaline phosphatase family. In terms of assembly, homodimer. It depends on Mg(2+) as a cofactor. Requires Zn(2+) as cofactor. Ca(2+) serves as cofactor. As to expression, detected in placenta (at protein level).

It localises to the cell membrane. The catalysed reaction is a phosphate monoester + H2O = an alcohol + phosphate. Its function is as follows. Alkaline phosphatase that can hydrolyze various phosphate compounds. The polypeptide is Alkaline phosphatase, placental type (Homo sapiens (Human)).